The sequence spans 209 residues: Glycerol-3-phosphate acyltransferase (209 aa).

Transmembrane regions (helical) follow at residues 7–27 (IELA…AIIV), 85–105 (AIIL…FFGF), 117–137 (VMFG…LFVA), 142–162 (ISSL…YLLA), and 166–183 (MAWV…FWRH).

It belongs to the PlsY family. As to quaternary structure, probably interacts with PlsX.

Its subcellular location is the cell inner membrane. It carries out the reaction an acyl phosphate + sn-glycerol 3-phosphate = a 1-acyl-sn-glycero-3-phosphate + phosphate. It participates in lipid metabolism; phospholipid metabolism. Functionally, catalyzes the transfer of an acyl group from acyl-phosphate (acyl-PO(4)) to glycerol-3-phosphate (G3P) to form lysophosphatidic acid (LPA). This enzyme utilizes acyl-phosphate as fatty acyl donor, but not acyl-CoA or acyl-ACP. In Hydrogenovibrio crunogenus (strain DSM 25203 / XCL-2) (Thiomicrospira crunogena), this protein is Glycerol-3-phosphate acyltransferase.